The following is a 241-amino-acid chain: Ribosomal RNA small subunit methyltransferase G (241 aa).

S-adenosyl-L-methionine-binding positions include glycine 79, phenylalanine 84, 130 to 131 (AE), and arginine 150.

Belongs to the methyltransferase superfamily. RNA methyltransferase RsmG family.

Its subcellular location is the cytoplasm. Its function is as follows. Specifically methylates the N7 position of a guanine in 16S rRNA. The polypeptide is Ribosomal RNA small subunit methyltransferase G (Ligilactobacillus salivarius (strain UCC118) (Lactobacillus salivarius)).